Reading from the N-terminus, the 227-residue chain is Cytochrome c oxidase subunit 2 (227 aa).

Residues Met1–Ser14 are Mitochondrial intermembrane-facing. The chain crosses the membrane as a helical span at residues Pro15–Met45. The Mitochondrial matrix portion of the chain corresponds to Leu46–Gln59. A helical membrane pass occupies residues Glu60–Met87. The Mitochondrial intermembrane segment spans residues Asp88–Ile227. Cu cation-binding residues include His161, Cys196, Glu198, Cys200, His204, and Met207. Glu198 serves as a coordination point for Mg(2+).

The protein belongs to the cytochrome c oxidase subunit 2 family. As to quaternary structure, component of the cytochrome c oxidase (complex IV, CIV), a multisubunit enzyme composed of 14 subunits. The complex is composed of a catalytic core of 3 subunits MT-CO1, MT-CO2 and MT-CO3, encoded in the mitochondrial DNA, and 11 supernumerary subunits COX4I, COX5A, COX5B, COX6A, COX6B, COX6C, COX7A, COX7B, COX7C, COX8 and NDUFA4, which are encoded in the nuclear genome. The complex exists as a monomer or a dimer and forms supercomplexes (SCs) in the inner mitochondrial membrane with NADH-ubiquinone oxidoreductase (complex I, CI) and ubiquinol-cytochrome c oxidoreductase (cytochrome b-c1 complex, complex III, CIII), resulting in different assemblies (supercomplex SCI(1)III(2)IV(1) and megacomplex MCI(2)III(2)IV(2)). Found in a complex with TMEM177, COA6, COX18, COX20, SCO1 and SCO2. Interacts with TMEM177 in a COX20-dependent manner. Interacts with COX20. Interacts with COX16. The cofactor is Cu cation.

The protein resides in the mitochondrion inner membrane. The catalysed reaction is 4 Fe(II)-[cytochrome c] + O2 + 8 H(+)(in) = 4 Fe(III)-[cytochrome c] + 2 H2O + 4 H(+)(out). Functionally, component of the cytochrome c oxidase, the last enzyme in the mitochondrial electron transport chain which drives oxidative phosphorylation. The respiratory chain contains 3 multisubunit complexes succinate dehydrogenase (complex II, CII), ubiquinol-cytochrome c oxidoreductase (cytochrome b-c1 complex, complex III, CIII) and cytochrome c oxidase (complex IV, CIV), that cooperate to transfer electrons derived from NADH and succinate to molecular oxygen, creating an electrochemical gradient over the inner membrane that drives transmembrane transport and the ATP synthase. Cytochrome c oxidase is the component of the respiratory chain that catalyzes the reduction of oxygen to water. Electrons originating from reduced cytochrome c in the intermembrane space (IMS) are transferred via the dinuclear copper A center (CU(A)) of subunit 2 and heme A of subunit 1 to the active site in subunit 1, a binuclear center (BNC) formed by heme A3 and copper B (CU(B)). The BNC reduces molecular oxygen to 2 water molecules using 4 electrons from cytochrome c in the IMS and 4 protons from the mitochondrial matrix. The protein is Cytochrome c oxidase subunit 2 (MT-CO2) of Berylmys bowersi (Bower's white-toothed rat).